The sequence spans 360 residues: BOLA class I histocompatibility antigen, alpha chain BL3-6 (360 aa).

The signal sequence occupies residues 1 to 21; the sequence is MGPRALLLLLSGVLILTETRA. Residues 22-111 form an alpha-1 region; that stretch reads GSHSLRYFST…LRGYYNQSEA (90 aa). At 22–308 the chain is on the extracellular side; that stretch reads GSHSLRYFST…QPSFLTMGII (287 aa). Asn107 carries N-linked (GlcNAc...) asparagine glycosylation. Residues 112 to 203 form an alpha-2 region; the sequence is GSHTLQWMSG…ENGKDTLLRA (92 aa). Disulfide bonds link Cys122–Cys185 and Cys224–Cys280. Residues 204-295 are alpha-3; that stretch reads DPPKAHVTHH…GLQEPLTLRW (92 aa). An Ig-like C1-type domain is found at 206 to 292; sequence PKAHVTHHPI…QHEGLQEPLT (87 aa). A connecting peptide region spans residues 296–308; the sequence is EPPQPSFLTMGII. The chain crosses the membrane as a helical span at residues 309 to 328; sequence VGLVLLVVTGAVVAGVVICM. Topologically, residues 329–360 are cytoplasmic; that stretch reads KKRSGEKGGNYIQASSSDSAQGSDVSLTVPKV. A disordered region spans residues 340–360; that stretch reads IQASSSDSAQGSDVSLTVPKV. The segment covering 341–354 has biased composition (low complexity); the sequence is QASSSDSAQGSDVS. Residues Ser351 and Ser354 each carry the phosphoserine modification.

It belongs to the MHC class I family. In terms of assembly, heterodimer of an alpha chain and a beta chain (beta-2-microglobulin).

It is found in the membrane. In terms of biological role, involved in the presentation of foreign antigens to the immune system. In Bos taurus (Bovine), this protein is BOLA class I histocompatibility antigen, alpha chain BL3-6.